A 393-amino-acid chain; its full sequence is MKIVIVGIGYVGLANAILFSKNNENEVVLLDIDENKIQSINNHKSPIKDKLIEKFFVQNISKLHATSNIKEAYFNADFAVIATPTDYDEQLNFFDTRSIENVLKDIKNINSKINVIIKSTVPIGYTKTIKQKFNMSNIVFSPEFLREGSALYDSLYPSRIIIGDKSVLGKTIGDLFLKNIEKKNVDIFYMDSDEAESVKLFSNTYLAMRVGFFNEVDSYARKHNLNSADIIKGISADDRIGKYYNNPSFGYGGYCLPKDTKQLLANFYNIPNSLIKAIVETNEIRKKFITQLILEKKPNILGIYRLIMKQNSDNFRNSVIIDIIKYLQEYNSNIELIIYEPLVKEKKFLNIKVENDFNVFGAKVDLIIANRFDDKLKEIKDKVFSADVFYTDI.

NAD(+) is bound by residues V11, D31, K36, T85, T120, and E147. Substrate-binding positions include 143–147 (EFLRE), K199, N203, 244–248 (YNNPS), and G252. Y254 lines the NAD(+) pocket. C255 functions as the Nucleophile in the catalytic mechanism. K258 provides a ligand contact to NAD(+). A substrate-binding site is contributed by K309. R316 contacts NAD(+).

The protein belongs to the UDP-glucose/GDP-mannose dehydrogenase family. Homodimer.

The enzyme catalyses UDP-alpha-D-glucose + 2 NAD(+) + H2O = UDP-alpha-D-glucuronate + 2 NADH + 3 H(+). The protein operates within nucleotide-sugar biosynthesis; UDP-alpha-D-glucuronate biosynthesis; UDP-alpha-D-glucuronate from UDP-alpha-D-glucose: step 1/1. It functions in the pathway capsule biogenesis; capsule polysaccharide biosynthesis. Its function is as follows. Catalyzes the formation of UDP-glucuronic acid which is required for capsular polysaccharide synthesis. Does not catalyze the formation of glucuronamide moiety of the capsular polysaccharide. This is UDP-glucose 6-dehydrogenase from Campylobacter jejuni subsp. jejuni serotype O:2 (strain ATCC 700819 / NCTC 11168).